A 609-amino-acid chain; its full sequence is Zinc metalloproteinase/disintegrin-like HR1a (609 aa).

The signal sequence occupies residues 1-20 (MIQVLLVTICLAVFPYQGSS). Residues 21-190 (IILGSGNVND…KKASKLVVTA (170 aa)) constitute a propeptide that is removed on maturation. In terms of domain architecture, Peptidase M12B spans 200–396 (RFIELVIVAD…DEPQCILNEP (197 aa)). Glutamate 203 and aspartate 287 together coordinate Ca(2+). A glycan (N-linked (GlcNAc...) asparagine) is linked at asparagine 298. 3 cysteine pairs are disulfide-bonded: cysteine 311-cysteine 391, cysteine 351-cysteine 375, and cysteine 353-cysteine 358. A Zn(2+)-binding site is contributed by histidine 336. Glutamate 337 is a catalytic residue. The Zn(2+) site is built by histidine 340 and histidine 346. Asparagine 350 carries an N-linked (GlcNAc...) asparagine glycan. Asparagine 374 carries N-linked (GlcNAc...) asparagine glycosylation. Ca(2+)-binding residues include cysteine 391 and asparagine 394. Positions 397-400 (LRTD) are excised as a propeptide. A Disintegrin domain is found at 404–490 (PPVCGNELLE…DCPTDRFHRN (87 aa)). Residues valine 406, asparagine 409, leucine 411, glutamate 413, glutamate 416, and aspartate 419 each coordinate Ca(2+). 22 cysteine pairs are disulfide-bonded: cysteine 407-cysteine 426, cysteine 407-cysteine 436, cysteine 418-cysteine 431, cysteine 418-cysteine 436, cysteine 420-cysteine 426, cysteine 430-cysteine 453, cysteine 444-cysteine 450, cysteine 449-cysteine 475, cysteine 462-cysteine 482, cysteine 469-cysteine 494, cysteine 469-cysteine 501, cysteine 494-cysteine 506, cysteine 501-cysteine 506, cysteine 513-cysteine 528, cysteine 513-cysteine 563, cysteine 528-cysteine 571, cysteine 541-cysteine 551, cysteine 551-cysteine 558, cysteine 558-cysteine 597, cysteine 563-cysteine 571, cysteine 591-cysteine 602, and cysteine 597-cysteine 602. The D/ECD-tripeptide signature appears at 468 to 470 (ECD). Aspartate 470, glutamate 473, and aspartate 485 together coordinate Ca(2+). N-linked (GlcNAc...) asparagine glycosylation is present at asparagine 520.

This sequence belongs to the venom metalloproteinase (M12B) family. P-III subfamily. P-IIIb sub-subfamily. In terms of assembly, monomer. Zn(2+) serves as cofactor. Expressed by the venom gland.

It is found in the secreted. Zinc protease that induces hemorrhage and has proteolytic activity. Has preference for Ala, His, Pro, Met, and Tyr at the P1 position, in descending order (in vitro). Predominantly prefers Val and Asp at the P3 and P2 positions, respectively. In terms of biological role, inhibits platelet aggregation induced by ADP, thrombin, platelet-activating factor and collagen. Acts by inhibiting fibrinogen interaction with platelet receptors alpha-IIb/beta-3 (ITGA2B/ITGB3). This is Zinc metalloproteinase/disintegrin-like HR1a from Protobothrops flavoviridis (Habu).